The sequence spans 184 residues: MQTVLKDAEDRMKKALAALDKEFSRLRTGRATTSLLDGVRVDYYGTATQLDQLASVATPDSRTITIQPWDRKAFADIEKAILKSGLGLTPVNDGKIIRISIPPLTEDRRKDLVKVAKKYVEEAKVAMRNVRRDANELLKKKKNDKAISEDDQRKGQDDVQKLTDNYIVKTDEAFSKKEKEIMEI.

A disordered region spans residues 141 to 161; the sequence is KKNDKAISEDDQRKGQDDVQK.

This sequence belongs to the RRF family.

The protein resides in the cytoplasm. Its function is as follows. Responsible for the release of ribosomes from messenger RNA at the termination of protein biosynthesis. May increase the efficiency of translation by recycling ribosomes from one round of translation to another. This Solidesulfovibrio magneticus (strain ATCC 700980 / DSM 13731 / RS-1) (Desulfovibrio magneticus) protein is Ribosome-recycling factor.